A 107-amino-acid polypeptide reads, in one-letter code: Integration host factor subunit beta (107 aa).

Residues arginine 56–leucine 107 form a disordered region. Over residues lysine 65–leucine 107 the composition is skewed to basic and acidic residues.

This sequence belongs to the bacterial histone-like protein family. In terms of assembly, heterodimer of an alpha and a beta chain.

Functionally, this protein is one of the two subunits of integration host factor, a specific DNA-binding protein that functions in genetic recombination as well as in transcriptional and translational control. The chain is Integration host factor subunit beta from Paraburkholderia phymatum (strain DSM 17167 / CIP 108236 / LMG 21445 / STM815) (Burkholderia phymatum).